The sequence spans 405 residues: Tryptophan synthase beta chain (405 aa).

An N6-(pyridoxal phosphate)lysine modification is found at Lys-95.

It belongs to the TrpB family. Tetramer of two alpha and two beta chains. The cofactor is pyridoxal 5'-phosphate.

It carries out the reaction (1S,2R)-1-C-(indol-3-yl)glycerol 3-phosphate + L-serine = D-glyceraldehyde 3-phosphate + L-tryptophan + H2O. Its pathway is amino-acid biosynthesis; L-tryptophan biosynthesis; L-tryptophan from chorismate: step 5/5. Its function is as follows. The beta subunit is responsible for the synthesis of L-tryptophan from indole and L-serine. This chain is Tryptophan synthase beta chain, found in Pseudomonas putida (strain W619).